Here is a 248-residue protein sequence, read N- to C-terminus: Aspartate/glutamate leucyltransferase (248 aa).

The protein belongs to the R-transferase family. Bpt subfamily.

It is found in the cytoplasm. It catalyses the reaction N-terminal L-glutamyl-[protein] + L-leucyl-tRNA(Leu) = N-terminal L-leucyl-L-glutamyl-[protein] + tRNA(Leu) + H(+). The catalysed reaction is N-terminal L-aspartyl-[protein] + L-leucyl-tRNA(Leu) = N-terminal L-leucyl-L-aspartyl-[protein] + tRNA(Leu) + H(+). Functions in the N-end rule pathway of protein degradation where it conjugates Leu from its aminoacyl-tRNA to the N-termini of proteins containing an N-terminal aspartate or glutamate. This is Aspartate/glutamate leucyltransferase from Methylorubrum populi (strain ATCC BAA-705 / NCIMB 13946 / BJ001) (Methylobacterium populi).